Here is a 128-residue protein sequence, read N- to C-terminus: Ribonuclease P protein component (128 aa).

This sequence belongs to the RnpA family. In terms of assembly, consists of a catalytic RNA component (M1 or rnpB) and a protein subunit.

The enzyme catalyses Endonucleolytic cleavage of RNA, removing 5'-extranucleotides from tRNA precursor.. RNaseP catalyzes the removal of the 5'-leader sequence from pre-tRNA to produce the mature 5'-terminus. It can also cleave other RNA substrates such as 4.5S RNA. The protein component plays an auxiliary but essential role in vivo by binding to the 5'-leader sequence and broadening the substrate specificity of the ribozyme. The sequence is that of Ribonuclease P protein component from Prochlorococcus marinus (strain MIT 9313).